Here is a 439-residue protein sequence, read N- to C-terminus: MQVIPACNSAAIRSLCPTPESFRNMGWLSVSDAVYSEFIGELATRASNRNYSNEFGLMQPIQEFKAFIESDPVVHQEFIDMFEGIQDSPRNYQELCNMFNDIFRKAPVYGDLGPPVYMIMAKLMNTRAGFSAFTRQRLNLHFKKLFDTWGLFLSSKDSRNVLVADQFDDRHCGWLNERALSAMVKHYNGRAFDEVFLCDKNAPYYGFNSYDDFFNRRFRNRDIDRPVVGGVNNTTLISAACESLSYNVSYDVQSLDTLVFKGETYSLKHLLNNDPFTPQFEHGSILQGFLNVTAYHRWHAPVNGTIVKIINVPGTYFAQAPSTIGDPIPDNDYDPPPYLKSLVYFSNIAARQIMFIEADNKEIGLIFLVFIGMTEISTCEATVSEGQHVNRGDDLGMFHFGGSSFALGLRKDCRAEIVEKFTEPGTVIRINEVVAALKA.

It belongs to the phosphatidylserine decarboxylase family.

It catalyses the reaction L-tryptophan + H(+) = tryptamine + CO2. It participates in secondary metabolite biosynthesis. L-tryptophan decarboxylase; part of the gene cluster that mediates the biosynthesis of psilocybin, a psychotropic tryptamine-derived natural product. The first step in the pathway is the decarboxylation of L-tryptophan to tryptamine by the decarboxylase psiD. 4-hydroxy-L-tryptophan is accepted as substrate by psiD as well. The cytochrome P450 monooxygenase psiH then converts tryptamine to 4-hydroxytryptamine. The kinase psiK catalyzes the 4-O-phosphorylation step by converting 4-hydroxytryptamine into norbaeocystin. The methyltransferase psiM then catalyzes iterative methyl transfer to the amino group of norbaeocystin to yield psilocybin via a monomethylated intermediate, baeocystin. 4-hydroxy-6-methyl-l-tryptophancan also be converted the decarboxylase PsiD, kinase PsiK, and methyltransferase PsiM into respectively 6-methyl-norbaeocystin, 6-methylbaeocystin, and 6-methylpsilocybin. The chain is L-tryptophan decarboxylase from Psilocybe cubensis (Psychedelic mushroom).